We begin with the raw amino-acid sequence, 622 residues long: 1-deoxy-D-xylulose-5-phosphate synthase (622 aa).

Residues His80 and 121–123 (GHS) each bind thiamine diphosphate. Residue Asp152 coordinates Mg(2+). Thiamine diphosphate contacts are provided by residues 153–154 (GA), Asn181, Tyr288, and Glu370. Asn181 is a binding site for Mg(2+).

It belongs to the transketolase family. DXPS subfamily. Homodimer. Requires Mg(2+) as cofactor. Thiamine diphosphate is required as a cofactor.

The enzyme catalyses D-glyceraldehyde 3-phosphate + pyruvate + H(+) = 1-deoxy-D-xylulose 5-phosphate + CO2. Its pathway is metabolic intermediate biosynthesis; 1-deoxy-D-xylulose 5-phosphate biosynthesis; 1-deoxy-D-xylulose 5-phosphate from D-glyceraldehyde 3-phosphate and pyruvate: step 1/1. Catalyzes the acyloin condensation reaction between C atoms 2 and 3 of pyruvate and glyceraldehyde 3-phosphate to yield 1-deoxy-D-xylulose-5-phosphate (DXP). The chain is 1-deoxy-D-xylulose-5-phosphate synthase from Shewanella putrefaciens (strain CN-32 / ATCC BAA-453).